The following is a 160-amino-acid chain: Cytochrome b6-f complex subunit 4 (160 aa).

Transmembrane regions (helical) follow at residues 36–56 (LLYI…GLAV), 95–115 (LLGI…PFIE), and 131–151 (AFFL…CLPI).

This sequence belongs to the cytochrome b family. PetD subfamily. In terms of assembly, the 4 large subunits of the cytochrome b6-f complex are cytochrome b6, subunit IV (17 kDa polypeptide, PetD), cytochrome f and the Rieske protein, while the 4 small subunits are PetG, PetL, PetM and PetN. The complex functions as a dimer.

Its subcellular location is the cellular thylakoid membrane. In terms of biological role, component of the cytochrome b6-f complex, which mediates electron transfer between photosystem II (PSII) and photosystem I (PSI), cyclic electron flow around PSI, and state transitions. In Prochlorococcus marinus (strain SARG / CCMP1375 / SS120), this protein is Cytochrome b6-f complex subunit 4.